We begin with the raw amino-acid sequence, 264 residues long: Zinc import ATP-binding protein ZnuC (264 aa).

In terms of domain architecture, ABC transporter spans 20-235; that stretch reads VQLKNIEVTF…PNFIHFFGDQ (216 aa). 52–59 provides a ligand contact to ATP; it reads GPNGGGKS.

This sequence belongs to the ABC transporter superfamily. Zinc importer (TC 3.A.1.15.5) family. As to quaternary structure, the complex is composed of two ATP-binding proteins (ZnuC), two transmembrane proteins (ZnuB) and a solute-binding protein (ZnuA).

The protein localises to the cell inner membrane. The catalysed reaction is Zn(2+)(out) + ATP(in) + H2O(in) = Zn(2+)(in) + ADP(in) + phosphate(in) + H(+)(in). In terms of biological role, part of the ABC transporter complex ZnuABC involved in zinc import. Responsible for energy coupling to the transport system. The polypeptide is Zinc import ATP-binding protein ZnuC (Haemophilus ducreyi (strain 35000HP / ATCC 700724)).